Reading from the N-terminus, the 213-residue chain is Large ribosomal subunit protein uL4 (213 aa).

The interval 51-90 (TASTLTKAEVRGGGRKPYKQKHTGRARQGSIRNPHYVGGG) is disordered. Basic residues predominate over residues 63–75 (GGRKPYKQKHTGR).

Belongs to the universal ribosomal protein uL4 family. As to quaternary structure, part of the 50S ribosomal subunit.

Functionally, one of the primary rRNA binding proteins, this protein initially binds near the 5'-end of the 23S rRNA. It is important during the early stages of 50S assembly. It makes multiple contacts with different domains of the 23S rRNA in the assembled 50S subunit and ribosome. Its function is as follows. Forms part of the polypeptide exit tunnel. In Malacoplasma penetrans (strain HF-2) (Mycoplasma penetrans), this protein is Large ribosomal subunit protein uL4.